An 806-amino-acid chain; its full sequence is Leucine--tRNA ligase (806 aa).

The 'HIGH' region motif lies at 40-51; it reads PYPSGTGLHVGH. Positions 576–580 match the 'KMSKS' region motif; that stretch reads KMSKS. Lys-579 contacts ATP.

The protein belongs to the class-I aminoacyl-tRNA synthetase family.

The protein resides in the cytoplasm. It catalyses the reaction tRNA(Leu) + L-leucine + ATP = L-leucyl-tRNA(Leu) + AMP + diphosphate. This is Leucine--tRNA ligase from Prosthecochloris aestuarii (strain DSM 271 / SK 413).